The following is a 78-amino-acid chain: Pro-glucagon (78 aa).

The protein belongs to the glucagon family.

It localises to the secreted. In terms of biological role, plays a key role in glucose metabolism and homeostasis. Regulates blood glucose by increasing gluconeogenesis and decreasing glycolysis. The protein is Pro-glucagon (gcg) of Atractosteus spatula (Alligator gar).